Reading from the N-terminus, the 153-residue chain is Aspartate carbamoyltransferase regulatory chain (153 aa).

Positions 109, 114, 138, and 141 each coordinate Zn(2+).

Belongs to the PyrI family. Contains catalytic and regulatory chains. Zn(2+) is required as a cofactor.

Involved in allosteric regulation of aspartate carbamoyltransferase. In Vibrio vulnificus (strain CMCP6), this protein is Aspartate carbamoyltransferase regulatory chain.